The chain runs to 248 residues: 3-deoxy-manno-octulosonate cytidylyltransferase (248 aa).

The protein belongs to the KdsB family.

Its subcellular location is the cytoplasm. The enzyme catalyses 3-deoxy-alpha-D-manno-oct-2-ulosonate + CTP = CMP-3-deoxy-beta-D-manno-octulosonate + diphosphate. It functions in the pathway nucleotide-sugar biosynthesis; CMP-3-deoxy-D-manno-octulosonate biosynthesis; CMP-3-deoxy-D-manno-octulosonate from 3-deoxy-D-manno-octulosonate and CTP: step 1/1. It participates in bacterial outer membrane biogenesis; lipopolysaccharide biosynthesis. Its function is as follows. Activates KDO (a required 8-carbon sugar) for incorporation into bacterial lipopolysaccharide in Gram-negative bacteria. The sequence is that of 3-deoxy-manno-octulosonate cytidylyltransferase from Syntrophus aciditrophicus (strain SB).